The chain runs to 1002 residues: BTB/POZ domain-containing protein At1g04390 (1002 aa).

2 BTB domains span residues 680-758 (SDMR…EVES) and 808-889 (SDVI…PKPP).

Its pathway is protein modification; protein ubiquitination. Its function is as follows. May act as a substrate-specific adapter of an E3 ubiquitin-protein ligase complex (CUL3-RBX1-BTB) which mediates the ubiquitination and subsequent proteasomal degradation of target proteins. This is BTB/POZ domain-containing protein At1g04390 from Arabidopsis thaliana (Mouse-ear cress).